Consider the following 302-residue polypeptide: tRNA dimethylallyltransferase 1 (302 aa).

6–13 (GPTACGKT) contacts ATP. Position 8 to 13 (8 to 13 (TACGKT)) interacts with substrate. 2 interaction with substrate tRNA regions span residues 31 to 34 (DSRQ) and 154 to 158 (QRAIR).

Belongs to the IPP transferase family. In terms of assembly, monomer. Mg(2+) serves as cofactor.

The catalysed reaction is adenosine(37) in tRNA + dimethylallyl diphosphate = N(6)-dimethylallyladenosine(37) in tRNA + diphosphate. In terms of biological role, catalyzes the transfer of a dimethylallyl group onto the adenine at position 37 in tRNAs that read codons beginning with uridine, leading to the formation of N6-(dimethylallyl)adenosine (i(6)A). This Porphyromonas gingivalis (strain ATCC 33277 / DSM 20709 / CIP 103683 / JCM 12257 / NCTC 11834 / 2561) protein is tRNA dimethylallyltransferase 1.